Here is a 295-residue protein sequence, read N- to C-terminus: Alpha-soluble NSF attachment protein (295 aa).

Residue methionine 1 is modified to N-acetylmethionine. Phosphoserine occurs at positions 26, 29, and 195.

This sequence belongs to the SNAP family. Interacts with PRKCABP, and disrupts the interaction between GRIA2 and PRKCABP, leading to the internalization of GRIA2. Found in a complex with VAMP8. Component of a SNARE-like complex that contains at least ZW10, USE1L, RINT1, STX18 and NAPA/SNAP-alpha. Interacts with VTI1A. Interacts with STX12. Interacts with GNA12 (via N-terminus); the interaction promotes CDH5 localization to plasma membrane.

It localises to the cell membrane. In terms of biological role, required for vesicular transport between the endoplasmic reticulum and the Golgi apparatus. Together with GNA12 promotes CDH5 localization to plasma membrane. This is Alpha-soluble NSF attachment protein (Napa) from Mus musculus (Mouse).